Reading from the N-terminus, the 567-residue chain is Urease subunit alpha (567 aa).

The 438-residue stretch at 130 to 567 (GGIDTHIHFI…LPLAQRYFLF (438 aa)) folds into the Urease domain. Ni(2+)-binding residues include histidine 135, histidine 137, and lysine 218. Position 218 is an N6-carboxylysine (lysine 218). Histidine 220 contacts substrate. Ni(2+)-binding residues include histidine 247 and histidine 273. The Proton donor role is filled by histidine 321. Aspartate 361 is a binding site for Ni(2+).

It belongs to the metallo-dependent hydrolases superfamily. Urease alpha subunit family. Heterotrimer of UreA (gamma), UreB (beta) and UreC (alpha) subunits. Three heterotrimers associate to form the active enzyme. Ni cation is required as a cofactor. Carboxylation allows a single lysine to coordinate two nickel ions.

It localises to the cytoplasm. It catalyses the reaction urea + 2 H2O + H(+) = hydrogencarbonate + 2 NH4(+). It functions in the pathway nitrogen metabolism; urea degradation; CO(2) and NH(3) from urea (urease route): step 1/1. The protein is Urease subunit alpha of Methylobacillus flagellatus (strain ATCC 51484 / DSM 6875 / VKM B-1610 / KT).